The following is a 1096-amino-acid chain: Serine/threonine-protein kinase mig-15 (1096 aa).

Positions Phe-21–Ile-288 constitute a Protein kinase domain. ATP-binding positions include Val-27–Val-35 and Lys-50. The active-site Proton acceptor is Asp-151. The segment covering His-293–Asp-315 has biased composition (basic and acidic residues). 4 disordered regions span residues His-293–Met-351, Leu-380–Arg-492, Lys-517–Ile-545, and Asn-574–Pro-664. Residues Ala-316–Pro-328 are compositionally biased toward acidic residues. Residues Leu-380–Gln-393 are compositionally biased toward low complexity. Composition is skewed to basic and acidic residues over residues Val-397 to Leu-408 and Asn-453 to Ala-472. A compositionally biased stretch (pro residues) spans Ser-532 to Arg-541. Positions Leu-629–Asn-642 are enriched in acidic residues. A CNH domain is found at Ser-778–Val-1070.

It belongs to the protein kinase superfamily. STE Ser/Thr protein kinase family. STE20 subfamily.

The enzyme catalyses L-seryl-[protein] + ATP = O-phospho-L-seryl-[protein] + ADP + H(+). It carries out the reaction L-threonyl-[protein] + ATP = O-phospho-L-threonyl-[protein] + ADP + H(+). Functionally, involved in cell migration and signal transduction. Important in several developmental processes including epidermal development, Q neuroblast migrations and muscle arm targeting. Required with ina-1/pat-3 to stabilize the commissural axons growth cone along a precise direction and are required for the cell to respond appropriately when signaling in the growth cone must change. During gonad morphogenesis, involved in distal tip cell (DTC) migration from the dorsal side of the hermaphrodite body to the midbody to allow for formation of gonad arms. The protein is Serine/threonine-protein kinase mig-15 (mig-15) of Caenorhabditis elegans.